Reading from the N-terminus, the 215-residue chain is Phosphatidylserine decarboxylase proenzyme (215 aa).

Ser184 (schiff-base intermediate with substrate; via pyruvic acid) is an active-site residue. Pyruvic acid (Ser); by autocatalysis is present on Ser184.

It belongs to the phosphatidylserine decarboxylase family. PSD-A subfamily. Heterodimer of a large membrane-associated beta subunit and a small pyruvoyl-containing alpha subunit. Pyruvate serves as cofactor. Post-translationally, is synthesized initially as an inactive proenzyme. Formation of the active enzyme involves a self-maturation process in which the active site pyruvoyl group is generated from an internal serine residue via an autocatalytic post-translational modification. Two non-identical subunits are generated from the proenzyme in this reaction, and the pyruvate is formed at the N-terminus of the alpha chain, which is derived from the carboxyl end of the proenzyme. The post-translation cleavage follows an unusual pathway, termed non-hydrolytic serinolysis, in which the side chain hydroxyl group of the serine supplies its oxygen atom to form the C-terminus of the beta chain, while the remainder of the serine residue undergoes an oxidative deamination to produce ammonia and the pyruvoyl prosthetic group on the alpha chain.

It is found in the cell membrane. The catalysed reaction is a 1,2-diacyl-sn-glycero-3-phospho-L-serine + H(+) = a 1,2-diacyl-sn-glycero-3-phosphoethanolamine + CO2. Its pathway is phospholipid metabolism; phosphatidylethanolamine biosynthesis; phosphatidylethanolamine from CDP-diacylglycerol: step 2/2. Functionally, catalyzes the formation of phosphatidylethanolamine (PtdEtn) from phosphatidylserine (PtdSer). The protein is Phosphatidylserine decarboxylase proenzyme of Ralstonia nicotianae (strain ATCC BAA-1114 / GMI1000) (Ralstonia solanacearum).